A 612-amino-acid chain; its full sequence is Putative pentatricopeptide repeat-containing protein At5g40405 (612 aa).

PPR repeat units lie at residues 70-104 (TLFA…GNDL), 107-141 (DNYT…GFDN), 142-172 (DPHV…IPCP), 173-203 (DFVC…MPER), 204-238 (DPIA…GVKV), 239-273 (NGVA…KIKI), 274-304 (TVRL…MEEK), 305-339 (NVYT…GVTP), 340-375 (NAVT…GIEP), and 376-410 (QLEH…PHAA). Positions 411–486 (VWSSLLHASR…QPGCSVMEVN (76 aa)) are type E motif. A type E(+) motif region spans residues 487–517 (GEVHEFFVGDKSHPKYTQIDAVWKDISRRLR). A type DYW motif region spans residues 518 to 612 (LAGYKADTTP…DGHCSCNGFW (95 aa)).

This sequence belongs to the PPR family. PCMP-H subfamily.

This chain is Putative pentatricopeptide repeat-containing protein At5g40405 (PCMP-H14), found in Arabidopsis thaliana (Mouse-ear cress).